Reading from the N-terminus, the 1033-residue chain is Integrin alpha-IIb (1033 aa).

Residues 1–31 (MARASCAWHSLWLLQWTPLFLGPSAVPPVWA) form the signal peptide. The Extracellular portion of the chain corresponds to 32-988 (LNLDSEKFSV…TQLLRALEER (957 aa)). 7 FG-GAP repeats span residues 35–96 (DSEK…GGKC), 109–173 (NLGF…GRAE), 184–237 (SVYA…ISSY), 252–304 (TYDN…DSYY), 305–370 (QPLH…PQAL), 372–431 (TPTL…GLSP), and 434–495 (SQVL…VQDS). 2 N-linked (GlcNAc...) asparagine glycosylation sites follow: Asn46 and Asn75. 3 disulfides stabilise this stretch: Cys87–Cys96, Cys138–Cys161, and Cys177–Cys197. The Ca(2+) site is built by Glu273, Asp275, Asp277, Thr280, Glu282, Asp327, Asn329, Asp331, Arg333, Asp335, Asp395, Asp399, Tyr401, Asp403, Asp456, Asp458, Asn460, Tyr462, and Asp464. Disulfide bonds link Cys503–Cys514 and Cys520–Cys575. Asn600 carries an N-linked (GlcNAc...) asparagine glycan. 4 disulfide bridges follow: Cys632-Cys638, Cys704-Cys717, Cys856-Cys916, and Cys905-Cys911. A glycan (N-linked (GlcNAc...) asparagine) is linked at Asn710. N-linked (GlcNAc...) asparagine glycosylation occurs at Asn957. The helical transmembrane segment at 989 to 1014 (AIPVWWVLVGVLGGLLLLTLLVLAMW) threads the bilayer. Residues 1015 to 1033 (KAGFFKRNRPPLEEDEEEE) are Cytoplasmic-facing. Positions 1017 to 1021 (GFFKR) match the GFFKR motif motif.

Belongs to the integrin alpha chain family. In terms of assembly, heterodimer of an alpha and a beta subunit. The alpha subunit is composed of a heavy and a light chain linked by a disulfide bond. Alpha-IIb associates with beta-3. Directly interacts with RNF181. Interacts (via C-terminus cytoplasmic tail region) with CIB1; the interaction is direct and calcium-dependent. Interacts (via C-terminus cytoplasmic tail region) with CIB2, CIB3 and CIB4; the interactions are stabilized/increased in a calcium and magnesium-dependent manner. ITGA2B:ITGB3 interacts with PPIA/CYPA; the interaction is ROS and PPIase activity-dependent and is increased in the presence of thrombin. ITGA2B:ITGB3 interacts with SELP (via C-type lectin domain); the interaction mediates cell-cell interaction and adhesion. In terms of processing, cleaved by ELANE; the cleavage promotes activation of platelet fibrinogen receptor integrin alpha-IIb/beta-3.

It is found in the membrane. In terms of biological role, integrin alpha-IIb/beta-3 is a receptor for fibronectin, fibrinogen, plasminogen, prothrombin, thrombospondin and vitronectin. It recognizes the sequence R-G-D in a wide array of ligands. It recognizes the sequence H-H-L-G-G-G-A-K-Q-A-G-D-V in fibrinogen gamma chain. Following activation integrin alpha-IIb/beta-3 brings about platelet/platelet interaction through binding of soluble fibrinogen. This step leads to rapid platelet aggregation which physically plugs ruptured endothelial cell surface. The protein is Integrin alpha-IIb (Itga2b) of Mus musculus (Mouse).